The chain runs to 277 residues: Bifunctional protein FolD (277 aa).

Residues 164 to 166 (GRS), Ser-189, and Thr-230 contribute to the NADP(+) site.

Belongs to the tetrahydrofolate dehydrogenase/cyclohydrolase family. As to quaternary structure, homodimer.

The enzyme catalyses (6R)-5,10-methylene-5,6,7,8-tetrahydrofolate + NADP(+) = (6R)-5,10-methenyltetrahydrofolate + NADPH. It catalyses the reaction (6R)-5,10-methenyltetrahydrofolate + H2O = (6R)-10-formyltetrahydrofolate + H(+). The protein operates within one-carbon metabolism; tetrahydrofolate interconversion. Catalyzes the oxidation of 5,10-methylenetetrahydrofolate to 5,10-methenyltetrahydrofolate and then the hydrolysis of 5,10-methenyltetrahydrofolate to 10-formyltetrahydrofolate. The polypeptide is Bifunctional protein FolD (Clostridium perfringens (strain ATCC 13124 / DSM 756 / JCM 1290 / NCIMB 6125 / NCTC 8237 / Type A)).